The primary structure comprises 474 residues: Phenylalanine--tRNA ligase alpha subunit (474 aa).

L-phenylalanine contacts are provided by residues threonine 317, 356–358, and tyrosine 396; that span reads QLE. Glutamate 398 lines the Mg(2+) pocket. Residue phenylalanine 421 participates in L-phenylalanine binding.

Belongs to the class-II aminoacyl-tRNA synthetase family. Phe-tRNA synthetase alpha subunit type 2 subfamily. In terms of assembly, tetramer of two alpha and two beta subunits. The cofactor is Mg(2+).

It localises to the cytoplasm. The enzyme catalyses tRNA(Phe) + L-phenylalanine + ATP = L-phenylalanyl-tRNA(Phe) + AMP + diphosphate + H(+). In Archaeoglobus fulgidus (strain ATCC 49558 / DSM 4304 / JCM 9628 / NBRC 100126 / VC-16), this protein is Phenylalanine--tRNA ligase alpha subunit.